The primary structure comprises 483 residues: Cobyric acid synthase (483 aa).

The 188-residue stretch at 251 to 438 (SLVVAVPMLP…LHGVFNADEF (188 aa)) folds into the GATase cobBQ-type domain. Catalysis depends on cysteine 333, which acts as the Nucleophile. The active site involves histidine 430.

This sequence belongs to the CobB/CobQ family. CobQ subfamily.

It participates in cofactor biosynthesis; adenosylcobalamin biosynthesis. Functionally, catalyzes amidations at positions B, D, E, and G on adenosylcobyrinic A,C-diamide. NH(2) groups are provided by glutamine, and one molecule of ATP is hydrogenolyzed for each amidation. The chain is Cobyric acid synthase from Brucella anthropi (strain ATCC 49188 / DSM 6882 / CCUG 24695 / JCM 21032 / LMG 3331 / NBRC 15819 / NCTC 12168 / Alc 37) (Ochrobactrum anthropi).